A 344-amino-acid polypeptide reads, in one-letter code: Gibberellin receptor GID1C (344 aa).

Ala2 bears the N-acetylalanine mark. The short motif at 111 to 113 (HGG) is the Involved in the stabilization of the negatively charged intermediate by the formation of the oxyanion hole element. Gibberellin A4-binding positions include 113 to 114 (GS), Tyr125, and Ser189. Gibberellin A3 contacts are provided by Ser114, Tyr125, Ser189, and Phe236. Ser189 is an active-site residue. Asp287 is an active-site residue. Position 318 (Gly318) interacts with gibberellin A4. Residue Gly318 participates in gibberellin A3 binding.

This sequence belongs to the 'GDXG' lipolytic enzyme family. Interacts with the DELLA proteins GAI, RGA, RGL1, RGL2 and RGL3 in a GA-dependent manner. In terms of tissue distribution, widely expressed.

It localises to the nucleus. Functions as a soluble gibberellin (GA) receptor. GA is an essential hormone that regulates growth and development in plants. Binds with high affinity the biologically active gibberellin GA4, but has no affinity for the biologically inactive GAs. In response to GA, interacts with specific DELLA proteins, known as repressors of GA-induced growth, and targets them for degradation via proteasome. Seems to be required for GA signaling that controls root growth, seed germination and stem elongation. Partially redundant with GID1A and GID1B. In Arabidopsis thaliana (Mouse-ear cress), this protein is Gibberellin receptor GID1C (GID1C).